Here is a 419-residue protein sequence, read N- to C-terminus: Heparan-sulfate 6-O-sulfotransferase 3-B (419 aa).

At 1–7 (MNDKPNK) the chain is on the cytoplasmic side. A helical; Signal-anchor for type II membrane protein transmembrane segment spans residues 8–28 (WIFIPILAILFVMIGYQYVCP). Residues 29-419 (AGGQACHFRT…EDYASQVVRW (391 aa)) are Lumenal-facing. Asn-77 carries N-linked (GlcNAc...) asparagine glycosylation. 101–109 (HIQKTGGTT) contributes to the 3'-phosphoadenylyl sulfate binding site. Substrate is bound by residues 131–132 (KK), Arg-148, Trp-153, and His-158. His-158 functions as the Proton acceptor in the catalytic mechanism. Positions 191 and 199 each coordinate 3'-phosphoadenylyl sulfate. Residues His-203 and Trp-210 each coordinate substrate. N-linked (GlcNAc...) asparagine glycans are attached at residues Asn-270 and Asn-275. Residue 323 to 325 (TQI) participates in 3'-phosphoadenylyl sulfate binding. Asn-326 carries N-linked (GlcNAc...) asparagine glycosylation. 329–330 (RA) serves as a coordination point for 3'-phosphoadenylyl sulfate. N-linked (GlcNAc...) asparagine glycans are attached at residues Asn-393 and Asn-402.

This sequence belongs to the sulfotransferase 6 family. As to expression, in early somitogenesis, expressed in presumptive forebrain and midbrain, tail bud and Kupffer's vesicle. During mid-somitogenesis, ubiquitous expression which is strongest in the somites and eye. During late somitogenesis, predominantly expressed in eye, hindbrain and ventral somites. At 24 hours post-fertilization (hpf), restricted to lens and neural retina, brain, otic vesicle and somites. At 36 hpf, brain expression is restricted to telencephalon. At 48 hpf, restricted to telencephalon and pectoral fin.

It is found in the membrane. It catalyses the reaction alpha-D-glucosaminyl-[heparan sulfate](n) + 3'-phosphoadenylyl sulfate = 6-sulfo-alpha-D-glucosaminyl-[heparan sulfate](n) + adenosine 3',5'-bisphosphate + H(+). Its function is as follows. 6-O-sulfation enzyme which catalyzes the transfer of sulfate from 3'-phosphoadenosine 5'-phosphosulfate (PAPS) to position 6 of the N-sulfoglucosamine residue (GlcNS) of heparan sulfate. In Danio rerio (Zebrafish), this protein is Heparan-sulfate 6-O-sulfotransferase 3-B.